A 494-amino-acid polypeptide reads, in one-letter code: Alpha-amylase-related protein (494 aa).

Residues 1–20 (MFKFASAVILCVVAASSTLA) form the signal peptide. The residue at position 21 (Gln-21) is a Pyrrolidone carboxylic acid. A disulfide bridge links Cys-48 with Cys-104. Residues Asn-118, Gln-169, and Asp-178 each coordinate Ca(2+). Cys-157 and Cys-171 are disulfide-bonded. Chloride is bound at residue Arg-206. The active-site Nucleophile is Asp-208. His-212 contributes to the Ca(2+) binding site. Glu-245 (proton donor) is an active-site residue. Positions 308 and 343 each coordinate chloride. Cystine bridges form between Cys-376/Cys-382, Cys-418/Cys-441, and Cys-448/Cys-460.

The protein belongs to the glycosyl hydrolase 13 family. In terms of assembly, monomer. It depends on Ca(2+) as a cofactor. Requires chloride as cofactor.

The protein localises to the secreted. The enzyme catalyses Endohydrolysis of (1-&gt;4)-alpha-D-glucosidic linkages in polysaccharides containing three or more (1-&gt;4)-alpha-linked D-glucose units.. The sequence is that of Alpha-amylase-related protein (Amyrel) from Drosophila varians (Fruit fly).